Consider the following 2167-residue polypeptide: SH3 and multiple ankyrin repeat domains protein 1 (2167 aa).

Residues 1-63 (MTHSPATSED…TRGLQGRSMS (63 aa)) form a disordered region. A compositionally biased stretch (low complexity) spans 17-32 (SECPEGGSESDSSPDG). The segment covering 33–47 (PGRGPQGTRGRGSGA) has biased composition (gly residues). Position 43 is an omega-N-methylarginine (R43). Y186 carries the post-translational modification Phosphotyrosine. ANK repeat units follow at residues 195 to 210 (VARLLDKGLDPNYHDS), 212 to 245 (SGETPLTLAAQTEGSVEVIRTLCLGGAHIDFRAR), 246 to 278 (DGMTALHKAACARHCLALTALLDLGGSPNYKDR), 279 to 312 (RGLTPLFHTAMVGGDPRCCELLLYNRAQLGIADE), 313 to 345 (NGWQEIHQACQRGHSQHLEHLLFYGAEPGAQNA), 346 to 378 (SGNTALHICALYNKETCARILLYRGANKDVKNN), and 379 to 395 (NGQTPFQVAVIAGNFEL). Disordered stretches follow at residues 413–432 (SPKYAARRRGPPGAGLTVPP) and 453–546 (APGA…SRGR). Over residues 453–479 (APGASSSGTPGPTSGPQGQSQPSAPST) the composition is skewed to low complexity. Gly residues predominate over residues 527–542 (PAGGTGGSGGPGGSLG). S540 bears the Phosphoserine mark. An Omega-N-methylarginine modification is found at R544. The SH3 domain occupies 554 to 613 (VPGRSFMAVKSYQAQGEGEISLSKGEKIKVLSIGEGGFWEGQVKGRVGWFPSDCLEEVAN). Phosphoserine occurs at positions 638, 641, 671, and 791. Positions 663-757 (TVLLQKKDSE…TLMVKVVMVT (95 aa)) constitute a PDZ domain. Residues 841–894 (ISASESPGPGGLASLGKHRPKGFFATESSFDPHHRSQPSYDRPSFLPPGPGLML) form a disordered region. Position 898 is a phosphoserine (S898). Disordered regions lie at residues 917–1233 (SRSL…LDFT), 1245–1294 (RREG…SIDE), 1308–1417 (GGSS…VLRL), 1429–1725 (RAGL…AGVA), 1740–1787 (GQAF…DPVT), 1842–1866 (KLLPWEEGPGPPPPPLPGPLSQPQA), 1898–1988 (PWAR…STRH), and 2002–2029 (RRAPSPSLLPASDHKVSPAPRPSSLPIL). A compositionally biased stretch (pro residues) spans 928–947 (IPPPPTTSPPEPPYSTPPAP). R958 carries the post-translational modification Omega-N-methylarginine. Over residues 964–980 (PSSGGPLPASSPSSFDG) the composition is skewed to low complexity. Residues 1004–1028 (AHHHPPHHHHHHAPPPQPHHHHAHP) are compositionally biased toward basic residues. At R1059 the chain carries Omega-N-methylarginine. Low complexity predominate over residues 1064-1085 (SPTSGAPSPSHHSSSGGSSGPT). 2 positions are modified to omega-N-methylarginine: R1098 and R1109. Composition is skewed to low complexity over residues 1132 to 1146 (SIPSASSPTSPALPR) and 1171 to 1184 (STSSSGRSSQGSST). The segment covering 1203–1224 (SPAPATSPVPPSPSPVPTPASP) has biased composition (pro residues). Over residues 1245 to 1256 (RREGGWQNEARR) the composition is skewed to basic and acidic residues. Asymmetric dimethylarginine is present on R1257. A Phosphoserine modification is found at S1291. Residues 1363-1372 (ARERALKESS) show a composition bias toward basic and acidic residues. Pro residues predominate over residues 1378–1395 (PQPPPRPPSPRYDAPPPT). The span at 1396–1408 (LHHHSPHSPHSPH) shows a compositional bias: basic residues. R1429 carries the post-translational modification Omega-N-methylarginine. S1442 carries the post-translational modification Phosphoserine. Composition is skewed to low complexity over residues 1459 to 1469 (PGVGPLLLQLG) and 1530 to 1541 (RRVLPTSPTSPR). Positions 1589 to 1615 (PLTPGPPHPLPDPPSPATPLPAAPPPA) are enriched in pro residues. Residues 1624–1641 (DSTASSLTSYDSEVATLT) show a composition bias toward polar residues. Residues 1648-1676 (PGDPPAPGPPAPAAPAPPAPQPGPDPPPG) are compositionally biased toward pro residues. Residues 1684–1694 (VDSRSSSDHPL) show a composition bias toward basic and acidic residues. The segment covering 1695-1708 (ETISSASTLSSLSA) has biased composition (low complexity). Positions 1709–1724 (EGGGNTGGVAGGGAGV) are enriched in gly residues. The segment covering 1850–1861 (PGPPPPPLPGPL) has biased composition (pro residues). R1901 is subject to Omega-N-methylarginine. 3 stretches are compositionally biased toward low complexity: residues 1934–1945 (SQTSLLSKPSSS), 1960–1985 (TGSGVSSSTAAAPGATSPSASSASAS), and 2002–2012 (RRAPSPSLLPA). Omega-N-methylarginine is present on residues R2022, R2042, and R2080. An SAM domain is found at 2104–2167 (WTKFDVADWL…DRALKFFLER (64 aa)).

It belongs to the SHANK family. As to quaternary structure, may homomultimerize via its SAM domain. Interacts with the C-terminus of SSTR2 via the PDZ domain. Interacts with SHARPIN, SPTAN1 and DLGAP1/GKAP. Part of a complex with DLG4/PSD-95 and DLGAP1/GKAP. Interacts with BAIAP2. Interacts with IGSF9. Interacts with HOMER1 and HOMER3. In terms of tissue distribution, expressed only in brain (neuropil of cortex, CA1 region hippocampus and molecular layer of cerebellum).

The protein localises to the cytoplasm. It is found in the synapse. Its subcellular location is the postsynaptic density. Functionally, seems to be an adapter protein in the postsynaptic density (PSD) of excitatory synapses that interconnects receptors of the postsynaptic membrane including NMDA-type and metabotropic glutamate receptors, and the actin-based cytoskeleton. Plays a role in the structural and functional organization of the dendritic spine and synaptic junction. Overexpression promotes maturation of dendritic spines and the enlargement of spine heads via its ability to recruit Homer to postsynaptic sites, and enhances presynaptic function. The polypeptide is SH3 and multiple ankyrin repeat domains protein 1 (Shank1) (Rattus norvegicus (Rat)).